We begin with the raw amino-acid sequence, 42 residues long: Photosystem I reaction center subunit IX (42 aa).

Residues Tyr7–Ile27 form a helical membrane-spanning segment.

It belongs to the PsaJ family.

It is found in the plastid membrane. May help in the organization of the PsaE and PsaF subunits. The protein is Photosystem I reaction center subunit IX of Aneura mirabilis (Parasitic liverwort).